The chain runs to 410 residues: MAWFQHVKLYIASCINLFTKIQKPYLSMAMDSKECSLLPFELFEEILCRVPTKSLLRLKLTCKRWLALFNDKRFIYKHLALVREHIIRTNQMVKIINPVVGACSSFSLPNKFQVKGEIYTMVPCDGLLLCIFETGSMAVWNPCLNQVRWIFLLNPSFRGCSCYGIGYDGLSRDSYKILRFVNGVFTKNEYANTGSYKPEVDIYELKSNSWKTFKVSLDWHVVLRCKGLSLKGNMYWIAKWNRKPDIFIQSFNFSTETFEPLCSLPVRYDVHNVVALSAFKGDNLSLLHQSKETSKIDVWVTNKVKNGVSILWTKLFSVTRPDLPVLLAFENLSYPVHFIDKNNRIVVCCEEVLADKRNVAVNIYVIGEDEIKSQDEIEQHQLGFSWPFISGYTYLPSLVPVPSSEDNTPE.

The 48-residue stretch at 32–79 folds into the F-box domain; that stretch reads SKECSLLPFELFEEILCRVPTKSLLRLKLTCKRWLALFNDKRFIYKHL. WD repeat units follow at residues 109 to 150 and 269 to 309; these read PNKF…VRWI and DVHN…NGVS.

This is F-box/WD-40 repeat-containing protein 1 (FBW1) from Arabidopsis thaliana (Mouse-ear cress).